We begin with the raw amino-acid sequence, 1001 residues long: Protein MEI2-like 4 (1001 aa).

The tract at residues 100–120 is disordered; sequence HANLPPSPWRPDQETGRQTDS. RRM domains follow at residues 275–348 and 360–433; these read RTLF…YSIP and GTIV…TSRL. Disordered regions lie at residues 767 to 815 and 941 to 1001; these read GGPS…KKQY and FHSD…PAKD. Basic and acidic residues predominate over residues 793–803; sequence PGERMRSRRND. A compositionally biased stretch (polar residues) spans 978–994; sequence DISITSVNCDTSTNGVD.

Probable RNA-binding protein that may play a role in growth regulation. In Oryza sativa subsp. japonica (Rice), this protein is Protein MEI2-like 4 (ML4).